A 193-amino-acid polypeptide reads, in one-letter code: uncharacterized protein (193 aa).

The helical transmembrane segment at 153–170 (WRYWAVIALIAAVLIYLY) threads the bilayer.

The protein localises to the membrane. This is an uncharacterized protein from Invertebrate iridescent virus 6 (IIV-6).